A 335-amino-acid polypeptide reads, in one-letter code: Ferredoxin--NADP reductase (335 aa).

Residues Asp35, Gln43, Tyr48, Ala88, Phe122, Asp287, and Ser328 each contribute to the FAD site.

This sequence belongs to the ferredoxin--NADP reductase type 2 family. Homodimer. FAD is required as a cofactor.

The catalysed reaction is 2 reduced [2Fe-2S]-[ferredoxin] + NADP(+) + H(+) = 2 oxidized [2Fe-2S]-[ferredoxin] + NADPH. This Thermus thermophilus (strain ATCC BAA-163 / DSM 7039 / HB27) protein is Ferredoxin--NADP reductase.